Consider the following 254-residue polypeptide: MSTNLHWQSFGQGPDLVLLHGWGMNGAVWQQTVESLQPYFRVHVVDLPGYGHSAESHAEDLAKIADLVLQDAPEKAVWLGWSLGGLVATHIALNAPQRVSKLITVASSPKFAAERPWRGIQPNVLTAFTDQLLEDFSVTIERFMALQAMGSPSARKDVKQLKQAVLSRPQPNPDSLLVGLNILADVDLRDALTSLSMPMLRLYGRLDGLVPIKVASDLNEQLPSTQQFVFNQSSHAPFMTEHEAFCLQVREFAA.

The 226-residue stretch at 16–241 folds into the AB hydrolase-1 domain; sequence LVLLHGWGMN…QSSHAPFMTE (226 aa). Substrate is bound by residues tryptophan 22, 82–83, and 143–147; these read SL and FMALQ. Serine 82 (nucleophile) is an active-site residue. Catalysis depends on residues aspartate 207 and histidine 235. A substrate-binding site is contributed by histidine 235.

The protein belongs to the AB hydrolase superfamily. Carboxylesterase BioH family. In terms of assembly, monomer.

It localises to the cytoplasm. The enzyme catalyses 6-carboxyhexanoyl-[ACP] methyl ester + H2O = 6-carboxyhexanoyl-[ACP] + methanol + H(+). It participates in cofactor biosynthesis; biotin biosynthesis. Its function is as follows. The physiological role of BioH is to remove the methyl group introduced by BioC when the pimeloyl moiety is complete. It allows to synthesize pimeloyl-ACP via the fatty acid synthetic pathway through the hydrolysis of the ester bonds of pimeloyl-ACP esters. The protein is Pimeloyl-[acyl-carrier protein] methyl ester esterase of Vibrio campbellii (strain ATCC BAA-1116).